We begin with the raw amino-acid sequence, 309 residues long: Elongation factor Ts (309 aa).

Positions 80 to 83 (TDFV) are involved in Mg(2+) ion dislocation from EF-Tu.

Belongs to the EF-Ts family.

It is found in the cytoplasm. Associates with the EF-Tu.GDP complex and induces the exchange of GDP to GTP. It remains bound to the aminoacyl-tRNA.EF-Tu.GTP complex up to the GTP hydrolysis stage on the ribosome. This is Elongation factor Ts from Rhodospirillum rubrum (strain ATCC 11170 / ATH 1.1.1 / DSM 467 / LMG 4362 / NCIMB 8255 / S1).